The primary structure comprises 358 residues: Tyrosinase ustQ (358 aa).

The N-linked (GlcNAc...) asparagine glycan is linked to Asn28. The chain crosses the membrane as a helical span at residues 37–57; that stretch reads FVPVYAGLTIISLITVTVSLV. N-linked (GlcNAc...) asparagine glycans are attached at residues Asn91 and Asn109. Positions 128 and 137 each coordinate Cu cation. Residues Asn172 and Asn214 are each glycosylated (N-linked (GlcNAc...) asparagine). Residues His266, His270, and His292 each coordinate Cu cation. Asn321 and Asn325 each carry an N-linked (GlcNAc...) asparagine glycan.

This sequence belongs to the tyrosinase family. The cofactor is Cu(2+).

The protein localises to the membrane. The catalysed reaction is 2 L-dopa + O2 = 2 L-dopaquinone + 2 H2O. It catalyses the reaction L-tyrosine + O2 = L-dopaquinone + H2O. Its pathway is mycotoxin biosynthesis. Its function is as follows. Tyrosinase; part of the gene cluster that mediates the biosynthesis of the secondary metabolite ustiloxin B, an antimitotic tetrapeptide. First, ustA is processed by the subtilisin-like endoprotease Kex2 that is outside the ustiloxin B gene cluster, at the C-terminal side of Arg-Lys, after transfer to Golgi apparatus through the endoplasmic reticulum (ER). Cleavage by KEX2 generates 16 peptides YAIG-I to YAIG-XVI. To process the precursor peptide further, at least two peptidases are necessary to cleave the N-terminal and C-terminal sides of the Tyr-Ala-Ile-Gly core peptide which serves as backbone for the synthesis of ustiloxin B, through cyclization and modification of the tyrosine with a non-protein coding amino acid, norvaline. One of the two peptidases must be the serine peptidase ustP; and the other pepdidase is probably ustH. Macrocyclization of the core peptide derived from ustA requires the tyrosinase ustQ, as well as the homologous oxidases ustYa and ustYb, and leads to the production of the first cyclization product N-desmethylustiloxin F. For the formation of N-desmethylustiloxin F, three oxidation steps are required, hydroxylation at the benzylic position, hydroxylation at either the aromatic ring of Tyr or beta-position of Ile, and oxidative cyclization. UstQ may catalyze the oxidation of a phenol moiety, whereas the ustYa and ustYb are most likely responsible for the remaining two-step oxidations. N-desmethylustiloxin F is then methylated by ustM to yield ustiloxin F which in turn substrate of the cytochrome P450 monooxygenase ustC which catalyzes the formation of S-deoxyustiloxin H. The flavoprotein monooxygenases ustF1 and ustF2 then participate in the modification of the side chain of S-deoxyustiloxin H, leading to the synthesis of an oxime intermediate, via ustiloxin H. Finally, carboxylative dehydration performed by the cysteine desulfurase-like protein ustD yields ustiloxin B. In Aspergillus flavus (strain ATCC 200026 / FGSC A1120 / IAM 13836 / NRRL 3357 / JCM 12722 / SRRC 167), this protein is Tyrosinase ustQ.